The primary structure comprises 326 residues: Methionyl-tRNA formyltransferase (326 aa).

110–113 is a (6S)-5,6,7,8-tetrahydrofolate binding site; that stretch reads SLLP. Residues 307–326 form a disordered region; the sequence is VGTRFSPPEAPQREPAPGEA.

This sequence belongs to the Fmt family.

It carries out the reaction L-methionyl-tRNA(fMet) + (6R)-10-formyltetrahydrofolate = N-formyl-L-methionyl-tRNA(fMet) + (6S)-5,6,7,8-tetrahydrofolate + H(+). Attaches a formyl group to the free amino group of methionyl-tRNA(fMet). The formyl group appears to play a dual role in the initiator identity of N-formylmethionyl-tRNA by promoting its recognition by IF2 and preventing the misappropriation of this tRNA by the elongation apparatus. In Symbiobacterium thermophilum (strain DSM 24528 / JCM 14929 / IAM 14863 / T), this protein is Methionyl-tRNA formyltransferase.